A 238-amino-acid chain; its full sequence is Cysteine-rich venom protein pseudechetoxin-like (238 aa).

The N-terminal stretch at 1–19 is a signal peptide; it reads MIAFIVLLSLAAVLQQSSG. Positions 20-28 are excised as a propeptide; that stretch reads TVDFASESS. The 127-residue stretch at 38–164 folds into the SCP domain; that stretch reads VDKHNALRRS…STKYLYVCQY (127 aa). 8 disulfide bridges follow: cysteine 75-cysteine 153, cysteine 92-cysteine 165, cysteine 148-cysteine 162, cysteine 184-cysteine 191, cysteine 187-cysteine 196, cysteine 200-cysteine 233, cysteine 209-cysteine 227, and cysteine 218-cysteine 231. The ShKT domain occupies 200–233; the sequence is CKHEDDFSNCKALAKNSKCQTAWIKSKCPATCFC.

The protein belongs to the CRISP family. As to expression, expressed by the venom gland.

Its subcellular location is the secreted. Functionally, blocks olfactory (CNGA2) and retinal (CNGA1) CNG channel currents. Does not affect neither depolarization- nor caffeine-induced contraction of smooth muscle. The polypeptide is Cysteine-rich venom protein pseudechetoxin-like (Hoplocephalus stephensii (Stephens's banded snake)).